The sequence spans 329 residues: PDZ and LIM domain protein 1 (329 aa).

The residue at position 2 (T2) is an N-acetylthreonine. The 83-residue stretch at T3–E85 folds into the PDZ domain. 2 positions are modified to phosphoserine: S90 and S130. Position 144 is a phosphotyrosine (Y144). The LIM zinc-binding domain occupies P258–P317. C260, C263, H280, C283, C286, C289, C307, and H310 together coordinate Zn(2+). T316 carries the phosphothreonine modification. A Phosphotyrosine modification is found at Y321.

In terms of assembly, interacts with ACTN1, ACTN2 and ACTN4. Interacts with PDLIM4. In terms of tissue distribution, strongly expressed in the heart and skeletal muscle, moderately expressed in the spleen, small intestine, colon, placenta, and lung. A lower level expression is seen in liver, thymus, kidney, prostate and pancreas and is not found in the brain, testis, ovary, and peripheral blood leukocytes.

The protein localises to the cytoplasm. The protein resides in the cytoskeleton. Its subcellular location is the myofibril. It is found in the sarcomere. It localises to the z line. Its function is as follows. Cytoskeletal protein that may act as an adapter that brings other proteins (like kinases) to the cytoskeleton. Involved in assembly, disassembly and directioning of stress fibers in fibroblasts. Required for the localization of ACTN1 and PALLD to stress fibers. Required for cell migration and in maintaining cell polarity of fibroblasts. The sequence is that of PDZ and LIM domain protein 1 (PDLIM1) from Homo sapiens (Human).